A 328-amino-acid polypeptide reads, in one-letter code: Complex I intermediate-associated protein 30, mitochondrial (328 aa).

A mitochondrion-targeting transit peptide spans 1–24 (MSSIHKLLTGIYIHKNFLRPRAAL). Polar residues predominate over residues 44-54 (VTSVDRASQQG). The tract at residues 44 to 80 (VTSVDRASQQGKTEEGLQGHDHKEVALDAPSPDRTPE) is disordered. Residues 55–69 (KTEEGLQGHDHKEVA) show a composition bias toward basic and acidic residues. Residue serine 319 is modified to Phosphoserine.

Belongs to the CIA30 family. Part of the mitochondrial complex I assembly/MCIA complex that comprises at least the core subunits TMEM126B, NDUFAF1, ECSIT and ACAD9 and complement subunits such as COA1 and TMEM186. Interacts with ECSIT. Interacts with ACAD9. At early stages of complex I assembly, it is found in intermediate subcomplexes that contain different subunits including NDUFB6, NDUFA6, NDUFA9, NDUFS3, NDUFS7, ND1, ND2 and ND3. Interacts with TMEM70 and TMEM242.

It is found in the mitochondrion. Its subcellular location is the mitochondrion matrix. Functionally, as part of the MCIA complex, involved in the assembly of the mitochondrial complex I. In Mus musculus (Mouse), this protein is Complex I intermediate-associated protein 30, mitochondrial.